Reading from the N-terminus, the 150-residue chain is Large ribosomal subunit protein bL9 (150 aa).

Belongs to the bacterial ribosomal protein bL9 family.

Functionally, binds to the 23S rRNA. The polypeptide is Large ribosomal subunit protein bL9 (Shewanella denitrificans (strain OS217 / ATCC BAA-1090 / DSM 15013)).